Reading from the N-terminus, the 316-residue chain is ATP synthase gamma chain (316 aa).

The protein belongs to the ATPase gamma chain family. F-type ATPases have 2 components, CF(1) - the catalytic core - and CF(0) - the membrane proton channel. CF(1) has five subunits: alpha(3), beta(3), gamma(1), delta(1), epsilon(1). CF(0) has three main subunits: a, b and c.

It is found in the cellular thylakoid membrane. Functionally, produces ATP from ADP in the presence of a proton gradient across the membrane. The gamma chain is believed to be important in regulating ATPase activity and the flow of protons through the CF(0) complex. The polypeptide is ATP synthase gamma chain (Prochlorococcus marinus (strain NATL2A)).